We begin with the raw amino-acid sequence, 356 residues long: Peptide-N(4)-(N-acetyl-beta-glucosaminyl)asparagine amidase (356 aa).

Cys-129, Cys-132, Cys-163, and Cys-166 together coordinate Zn(2+). Cys-189 functions as the Nucleophile in the catalytic mechanism. Residues His-216 and Asp-233 contribute to the active site. Residue Glu-236 participates in substrate binding. Residues 300 to 356 (IRQNLSPSEKEELKREDEAEERELASYNADEPQEAQMPRQSGSVEWTKARGEGGSDD) are disordered. Basic and acidic residues-rich tracts occupy residues 307 to 316 (SEKEELKRED) and 346 to 356 (TKARGEGGSDD).

It belongs to the transglutaminase-like superfamily. PNGase family. Zn(2+) serves as cofactor.

It is found in the cytoplasm. The catalysed reaction is Hydrolysis of an N(4)-(acetyl-beta-D-glucosaminyl)asparagine residue in which the glucosamine residue may be further glycosylated, to yield a (substituted) N-acetyl-beta-D-glucosaminylamine and a peptide containing an aspartate residue.. Specifically deglycosylates the denatured form of N-linked glycoproteins in the cytoplasm and assists their proteasome-mediated degradation. Cleaves the beta-aspartyl-glucosamine (GlcNAc) of the glycan and the amide side chain of Asn, converting Asn to Asp. Prefers proteins containing high-mannose over those bearing complex type oligosaccharides. Can recognize misfolded proteins in the endoplasmic reticulum that are exported to the cytosol to be destroyed and deglycosylate them, while it has no activity toward native proteins. Deglycosylation is a prerequisite for subsequent proteasome-mediated degradation of some, but not all, misfolded glycoproteins. The polypeptide is Peptide-N(4)-(N-acetyl-beta-glucosaminyl)asparagine amidase (PNG1) (Yarrowia lipolytica (strain CLIB 122 / E 150) (Yeast)).